The primary structure comprises 161 residues: Peroxynitrite isomerase 1 (161 aa).

A GXWXGXG motif is present at residues 17 to 23 (GTWTGRG). His-152 provides a ligand contact to heme b.

The protein belongs to the nitrobindin family. Homodimer. Heme b is required as a cofactor.

The catalysed reaction is peroxynitrite = nitrate. It participates in nitrogen metabolism. Functionally, heme-binding protein able to scavenge peroxynitrite and to protect free L-tyrosine against peroxynitrite-mediated nitration, by acting as a peroxynitrite isomerase that converts peroxynitrite to nitrate. Therefore, this protein likely plays a role in peroxynitrite sensing and in the detoxification of reactive nitrogen and oxygen species (RNS and ROS, respectively). Is able to bind nitric oxide (NO) in vitro, but may act as a sensor of peroxynitrite levels in vivo. This chain is Peroxynitrite isomerase 1, found in Mycolicibacterium paratuberculosis (strain ATCC BAA-968 / K-10) (Mycobacterium paratuberculosis).